A 122-amino-acid polypeptide reads, in one-letter code: Lithostathine (122 aa).

A signal peptide spans 1-26; that stretch reads MLPSMSLPSLXWMLLSCLMLLSQVQG. A propeptide spanning residues 27–37 is cleaved from the precursor; that stretch reads EDSPADTPSAR. One can recognise a C-type lectin domain in the interval 38–122; it reads ISCPKGSMAY…LEPNAGGWEW (85 aa). Residues Cys40 and Cys51 are joined by a disulfide bond.

As to quaternary structure, cleaved to give an A chain and a B chain joined by a disulfide bond. In terms of tissue distribution, in pancreatic acinar cells.

It is found in the secreted. Might act as an inhibitor of spontaneous calcium carbonate precipitation. The protein is Lithostathine (PTP) of Sus scrofa (Pig).